A 47-amino-acid chain; its full sequence is uncharacterized protein (47 aa).

One can recognise an ATP-cone domain in the interval 2-47 (LRVRKRDGRLEEFSRAKIVRTCLRAGASKKIAEKVAEELKRGYTMG).

This is an uncharacterized protein from Archaeoglobus fulgidus (strain ATCC 49558 / DSM 4304 / JCM 9628 / NBRC 100126 / VC-16).